A 318-amino-acid polypeptide reads, in one-letter code: Formimidoylglutamase (318 aa).

Residues histidine 130, aspartate 155, histidine 157, aspartate 159, aspartate 246, and aspartate 248 each contribute to the Mn(2+) site.

Belongs to the arginase family. The cofactor is Mn(2+).

It carries out the reaction N-formimidoyl-L-glutamate + H2O = formamide + L-glutamate. It participates in amino-acid degradation; L-histidine degradation into L-glutamate; L-glutamate from N-formimidoyl-L-glutamate (hydrolase route): step 1/1. In terms of biological role, catalyzes the conversion of N-formimidoyl-L-glutamate to L-glutamate and formamide. The sequence is that of Formimidoylglutamase from Klebsiella pneumoniae (strain 342).